The sequence spans 441 residues: Glutamyl-tRNA reductase (441 aa).

Substrate contacts are provided by residues 64 to 67 (TCNR), S123, 128 to 130 (ETQ), and Q134. C65 functions as the Nucleophile in the catalytic mechanism. 203 to 208 (GAGEMI) serves as a coordination point for NADP(+).

Belongs to the glutamyl-tRNA reductase family. In terms of assembly, homodimer.

It carries out the reaction (S)-4-amino-5-oxopentanoate + tRNA(Glu) + NADP(+) = L-glutamyl-tRNA(Glu) + NADPH + H(+). It participates in porphyrin-containing compound metabolism; protoporphyrin-IX biosynthesis; 5-aminolevulinate from L-glutamyl-tRNA(Glu): step 1/2. Functionally, catalyzes the NADPH-dependent reduction of glutamyl-tRNA(Glu) to glutamate 1-semialdehyde (GSA). In Burkholderia pseudomallei (strain K96243), this protein is Glutamyl-tRNA reductase.